Consider the following 108-residue polypeptide: Long neurotoxin 13 (108 aa).

The N-terminal stretch at 1 to 21 (MKTLLLTLVVVTIVCLDLAYT) is a signal peptide. 5 cysteine pairs are disulfide-bonded: Cys-24–Cys-42, Cys-35–Cys-63, Cys-48–Cys-52, Cys-67–Cys-78, and Cys-79–Cys-84.

The protein belongs to the three-finger toxin family. Long-chain subfamily. Type II alpha-neurotoxin sub-subfamily. Expressed by the venom gland.

The protein resides in the secreted. Functionally, binds with high affinity to muscular (alpha-1/CHRNA1) and neuronal (alpha-7/CHRNA7) nicotinic acetylcholine receptor (nAChR) and inhibits acetylcholine from binding to the receptor, thereby impairing neuromuscular and neuronal transmission. This chain is Long neurotoxin 13, found in Drysdalia coronoides (White-lipped snake).